A 127-amino-acid chain; its full sequence is Photosystem II extrinsic protein U (127 aa).

Positions 1-31 (MSRLFRRLSTLLLCSLLVLGVWLTQPLSVQA) are cleaved as a signal peptide.

It belongs to the PsbU family. In terms of assembly, PSII is composed of 1 copy each of membrane proteins PsbA, PsbB, PsbC, PsbD, PsbE, PsbF, PsbH, PsbI, PsbJ, PsbK, PsbL, PsbM, PsbT, PsbX, PsbY, PsbZ, Psb30/Ycf12, peripheral proteins PsbO, CyanoQ (PsbQ), PsbU, PsbV and a large number of cofactors. It forms dimeric complexes.

The protein resides in the cellular thylakoid membrane. Functionally, one of the extrinsic, lumenal subunits of photosystem II (PSII). PSII is a light-driven water plastoquinone oxidoreductase, using light energy to abstract electrons from H(2)O, generating a proton gradient subsequently used for ATP formation. The extrinsic proteins stabilize the structure of photosystem II oxygen-evolving complex (OEC), the ion environment of oxygen evolution and protect the OEC against heat-induced inactivation. The sequence is that of Photosystem II extrinsic protein U from Synechococcus sp. (strain RCC307).